A 222-amino-acid chain; its full sequence is Protein SHI RELATED SEQUENCE 4 (222 aa).

Zn(2+) contacts are provided by Cys72, Cys75, Cys83, Cys88, Cys92, and Cys99. Positions 72-99 form a DNA-binding region, zn(2)-C6 fungal-type; degenerate; sequence CQECGNQAKKGCTHGRCRTCCKSNGLHC. The disordered stretch occupies residues 114–137; the sequence is RERQQQLQTPTSNPTGGSGRVGKY. Residues 118-128 show a composition bias toward polar residues; the sequence is QQLQTPTSNPT. Residues 191–194 carry the Required for homo- and heterodimerization motif; that stretch reads IAGH.

It belongs to the SHI protein family. Expressed in cotyledon tips, leaf primordia, hydathodes, stipules, and lateral root primordia and weakly at the edges of petals and sepals.

The protein localises to the nucleus. In terms of biological role, transcription activator that binds DNA on 5'-ACTCTAC-3' and promotes auxin homeostasis-regulating gene expression (e.g. YUC genes), as well as genes affecting stamen development, cell expansion and timing of flowering. Synergistically with other SHI-related proteins, regulates gynoecium, stamen and leaf development in a dose-dependent manner, controlling apical-basal patterning. Promotes style and stigma formation, and influences vascular development during gynoecium development. May also have a role in the formation and/or maintenance of the shoot apical meristem (SAM). The chain is Protein SHI RELATED SEQUENCE 4 (SRS4) from Arabidopsis thaliana (Mouse-ear cress).